A 563-amino-acid chain; its full sequence is Mitochondrial distribution and morphology protein 34 (563 aa).

Positions 1-195 (MAFNFNWSPL…LPAIIHRLSL (195 aa)) constitute an SMP-LTD domain. Disordered regions lie at residues 298–460 (ERGD…QIPT) and 535–563 (RHDKTAREGFWSTSSNGDDAPPAYEPKAL). 2 stretches are compositionally biased toward polar residues: residues 303-332 (AGTTTPATTSLHRPQSSLGGQSTTYTFSNR) and 346-357 (SLVNMNSATTGL). Basic residues predominate over residues 365 to 383 (SRSHTTRKKKNRVVNLRKS). 2 stretches are compositionally biased toward polar residues: residues 386–402 (TDNVSESGESETASITA) and 444–460 (PSRSITPEQGNMNQIPT).

Belongs to the MDM34 family. In terms of assembly, component of the ER-mitochondria encounter structure (ERMES) or MDM complex, composed of mmm1, mdm10, mdm12 and mdm34.

It localises to the mitochondrion outer membrane. Its function is as follows. Component of the ERMES/MDM complex, which serves as a molecular tether to connect the endoplasmic reticulum (ER) and mitochondria. Components of this complex are involved in the control of mitochondrial shape and protein biogenesis, and function in nonvesicular lipid trafficking between the ER and mitochondria. Mdm34 is required for the interaction of the ER-resident membrane protein mmm1 and the outer mitochondrial membrane-resident beta-barrel protein mdm10. In Sclerotinia sclerotiorum (strain ATCC 18683 / 1980 / Ss-1) (White mold), this protein is Mitochondrial distribution and morphology protein 34.